A 387-amino-acid polypeptide reads, in one-letter code: Alpha-sarcoglycan (387 aa).

Residues 1-23 (MAAAVTWIPLLAGLLAGLRDTKA) form the signal peptide. Residues 24–293 (QQTTLHLLVG…RDFLTDALVT (270 aa)) lie on the Extracellular side of the membrane. Residues asparagine 174 and asparagine 246 are each glycosylated (N-linked (GlcNAc...) asparagine). Residues 294-314 (LLVPLLVALLLTLLLAYIMCF) form a helical membrane-spanning segment. Residues 315-387 (RREGRLKRDM…AQMPLILDQH (73 aa)) lie on the Cytoplasmic side of the membrane. Serine 377 carries the post-translational modification Phosphoserine.

It belongs to the sarcoglycan alpha/epsilon family. As to quaternary structure, cross-link to form 2 major subcomplexes: one consisting of SGCB, SGCD and SGCG and the other consisting of SGCB and SGCD. The association between SGCB and SGCG is particularly strong while SGCA is loosely associated with the other sarcoglycans. Interacts with the syntrophin SNTA1. Striated muscle, both skeletal and cardiac.

Its subcellular location is the cell membrane. It is found in the sarcolemma. The protein localises to the cytoplasm. It localises to the cytoskeleton. Functionally, component of the sarcoglycan complex, a subcomplex of the dystrophin-glycoprotein complex which forms a link between the F-actin cytoskeleton and the extracellular matrix. This Mus musculus (Mouse) protein is Alpha-sarcoglycan (Sgca).